The chain runs to 425 residues: MPASLVVGTQWGDEGKAKVIDFLSKDTDIIVRYQGGANAGHTVVVHGKKYVFHLVPSGVIYDQTICVIGNGVVLDPLFFIEECDRLQKEGFPVFDKLLLSDACHLLFPYHSQIDSARETTLSQEHKIGTTKKGIGICYADKMMRTGLRVGDLLDTSYQTRLKHLVDEKNRELDKLYGMPPVSYNDINEGLKFFLSKVKKNIINTAYYLDTELKKGKRVLLEGAQGTGLDVDFGTYPYVTSSNPTTGGALIGTGIPFQHLKHVIGITKAYTTRVGEGPFPTELLGEAGEKLRQKGGEFGATTGRPRRCGWFDVEMLKHSVRINGITSIALTKIDILSDYDTIPVATGYKLNGKTLDCFPSQGLDKVEVIYEEFPGWKSDISGICEFQKLPEKCKNYISALEKWIGVKINLVSTGPDRKDTIHGDSF.

Residues 12–18 and 40–42 contribute to the GTP site; these read GDEGKAK and GHT. Catalysis depends on Asp-13, which acts as the Proton acceptor. The Mg(2+) site is built by Asp-13 and Gly-40. Residues 13 to 16, 38 to 41, Thr-130, Arg-144, Gln-224, Thr-239, and Arg-303 contribute to the IMP site; these read DEGK and NAGH. The active-site Proton donor is His-41. 299–305 serves as a coordination point for substrate; that stretch reads ATTGRPR. GTP contacts are provided by residues Arg-305, 331–333, and 411–413; these read KID and STG.

This sequence belongs to the adenylosuccinate synthetase family. In terms of assembly, homodimer. Mg(2+) is required as a cofactor.

Its subcellular location is the cytoplasm. The enzyme catalyses IMP + L-aspartate + GTP = N(6)-(1,2-dicarboxyethyl)-AMP + GDP + phosphate + 2 H(+). It participates in purine metabolism; AMP biosynthesis via de novo pathway; AMP from IMP: step 1/2. Functionally, plays an important role in the de novo pathway of purine nucleotide biosynthesis. Catalyzes the first committed step in the biosynthesis of AMP from IMP. This Leptospira interrogans serogroup Icterohaemorrhagiae serovar copenhageni (strain Fiocruz L1-130) protein is Adenylosuccinate synthetase.